The primary structure comprises 319 residues: HTH-type transcriptional regulator YidZ (319 aa).

The HTH lysR-type domain occupies 8-65 (LDLNLLLCLQLLMQERSVTKAAKRMNVTPSAVSKSLAKLRAWFDDPLFVNTPLGLAPT). The segment at residues 25-44 (VTKAAKRMNVTPSAVSKSLA) is a DNA-binding region (H-T-H motif).

It belongs to the LysR transcriptional regulatory family.

Its function is as follows. Involved in anaerobic NO protection. The polypeptide is HTH-type transcriptional regulator YidZ (Salmonella agona (strain SL483)).